Consider the following 1196-residue polypeptide: DNA-directed RNA polymerase subunit beta (1196 aa).

The protein belongs to the RNA polymerase beta chain family. The RNAP catalytic core consists of 2 alpha, 1 beta, 1 beta' and 1 omega subunit. When a sigma factor is associated with the core the holoenzyme is formed, which can initiate transcription.

The enzyme catalyses RNA(n) + a ribonucleoside 5'-triphosphate = RNA(n+1) + diphosphate. Its function is as follows. DNA-dependent RNA polymerase catalyzes the transcription of DNA into RNA using the four ribonucleoside triphosphates as substrates. The sequence is that of DNA-directed RNA polymerase subunit beta from Lactococcus lactis subsp. cremoris (strain MG1363).